Here is a 588-residue protein sequence, read N- to C-terminus: Serine/threonine-protein kinase CBK1 (588 aa).

Disordered regions lie at residues 1–76 (MTDK…HQQQ) and 100–139 (QHQQ…RDRA). Residues 29–42 (LYQQNSNQSNTSLD) show a composition bias toward polar residues. Low complexity-rich tracts occupy residues 43 to 76 (QQQQ…HQQQ) and 100 to 117 (QHQQ…AQQQ). Positions 207 to 517 (FVTVKVIGKG…ANEIKSHPFF (311 aa)) constitute a Protein kinase domain. ATP-binding positions include 213–221 (IGKGAFGEV) and Lys236. The Proton acceptor role is filled by Asp330. The interval 370–389 (GTSSNPATQMGPPQNTNRQS) is disordered. Residues 518–586 (RGVDWSSIRE…SRFDNMTRRN (69 aa)) form the AGC-kinase C-terminal domain.

It belongs to the protein kinase superfamily. STE Ser/Thr protein kinase family. COT1 subfamily.

It carries out the reaction L-seryl-[protein] + ATP = O-phospho-L-seryl-[protein] + ADP + H(+). The enzyme catalyses L-threonyl-[protein] + ATP = O-phospho-L-threonyl-[protein] + ADP + H(+). In terms of biological role, protein kinase that seems to play a role in the regulation of cell morphogenesis and proliferation. This Yarrowia lipolytica (strain CLIB 122 / E 150) (Yeast) protein is Serine/threonine-protein kinase CBK1 (CBK1).